A 673-amino-acid chain; its full sequence is MTDRFELVSPYSPAGDQPAAIDKLVANFEAGLAKQTLLGVTGSGKTYTIANVVQQVQKPTLVMAPNKTLAAQLYGEFKSFFPNNAVEYFVSYYDYYQPEAYVPSSDTFIEKDSSINEHIEQMRLSATKTLLSRRDSLVVATVSAIYGLGAPEDYLSLRLILSIGEHIDQRQLIRHLTDLQYTRNEFELTRGAFRVRGEVLDVFPAESDTEALRIELFDGDIEQLTLFDPLTGETLRKLQRYTVYPKTHYATTRERTLSAVDTIKEELKERLEQLYSQNKLVEAQRLAQRTQFDLEMMAEVGFCNGIENYSRHLTGKAPGEPPPTLFDYLPPDALLVIDESHVTIPQIGAMYKGDRSRKETLVEFGFRLPSALDNRPLRFEEWEARSPRSIYVSATPGPYELRESAGEITELVVRPTGLIDPVVEIRPVGTQVDDLMSEVHERIKLGDRVLVTTLTKRMAENLTEYLGEHGIRVRYLHSDIDTVERVEIIRDLRLGKFDVLVGINLLREGLDMPEVSLVAILDADKEGFLRSTGSLIQTIGRAARNLRGKAILYADKMTRSMQAAIDETDRRREKQVEYNLEHGITPKSVARPISDIMEGAREDAAEKKAGKGRSKSRQVAEEPADYRAMGPAEIAGKLKALEQKMYQHAKDLEFEAAAQIRDQILKLKAASLA.

The region spanning 26 to 414 (ANFEAGLAKQ…AGEITELVVR (389 aa)) is the Helicase ATP-binding domain. 39 to 46 (GVTGSGKT) is an ATP binding site. Residues 92 to 115 (YYDYYQPEAYVPSSDTFIEKDSSI) carry the Beta-hairpin motif. Residues 431 to 597 (QVDDLMSEVH…SVARPISDIM (167 aa)) enclose the Helicase C-terminal domain. Positions 601-626 (REDAAEKKAGKGRSKSRQVAEEPADY) are disordered. The region spanning 635 to 670 (AGKLKALEQKMYQHAKDLEFEAAAQIRDQILKLKAA) is the UVR domain.

Belongs to the UvrB family. In terms of assembly, forms a heterotetramer with UvrA during the search for lesions. Interacts with UvrC in an incision complex.

Its subcellular location is the cytoplasm. Functionally, the UvrABC repair system catalyzes the recognition and processing of DNA lesions. A damage recognition complex composed of 2 UvrA and 2 UvrB subunits scans DNA for abnormalities. Upon binding of the UvrA(2)B(2) complex to a putative damaged site, the DNA wraps around one UvrB monomer. DNA wrap is dependent on ATP binding by UvrB and probably causes local melting of the DNA helix, facilitating insertion of UvrB beta-hairpin between the DNA strands. Then UvrB probes one DNA strand for the presence of a lesion. If a lesion is found the UvrA subunits dissociate and the UvrB-DNA preincision complex is formed. This complex is subsequently bound by UvrC and the second UvrB is released. If no lesion is found, the DNA wraps around the other UvrB subunit that will check the other stand for damage. In Xanthomonas campestris pv. campestris (strain 8004), this protein is UvrABC system protein B.